A 415-amino-acid polypeptide reads, in one-letter code: Peptide chain release factor subunit 1 (415 aa).

This sequence belongs to the eukaryotic release factor 1 family. As to quaternary structure, heterodimer of two subunits, one of which binds GTP.

It is found in the cytoplasm. Its function is as follows. Directs the termination of nascent peptide synthesis (translation) in response to the termination codons UAA, UAG and UGA. This is Peptide chain release factor subunit 1 from Thermococcus kodakarensis (strain ATCC BAA-918 / JCM 12380 / KOD1) (Pyrococcus kodakaraensis (strain KOD1)).